We begin with the raw amino-acid sequence, 156 residues long: MSRRHAAEKREVLPDAKYGDLVLTKFMNNLMIDGKKSVAETIVYNALTRVETKIKRAPIEVFHEALDNIQPSVEVRSRRVGGATYQVPVEVRPERRQALAIRWLIKAARSRNENTMEERLAGELLDAVQSRGTAVKKREDTHKMADANKAFSHYRW.

It belongs to the universal ribosomal protein uS7 family. As to quaternary structure, part of the 30S ribosomal subunit. Contacts proteins S9 and S11.

One of the primary rRNA binding proteins, it binds directly to 16S rRNA where it nucleates assembly of the head domain of the 30S subunit. Is located at the subunit interface close to the decoding center, probably blocks exit of the E-site tRNA. This Roseobacter denitrificans (strain ATCC 33942 / OCh 114) (Erythrobacter sp. (strain OCh 114)) protein is Small ribosomal subunit protein uS7.